The following is a 476-amino-acid chain: ATP synthase subunit beta (476 aa).

154–161 lines the ATP pocket; it reads GGAGVGKT.

Belongs to the ATPase alpha/beta chains family. F-type ATPases have 2 components, CF(1) - the catalytic core - and CF(0) - the membrane proton channel. CF(1) has five subunits: alpha(3), beta(3), gamma(1), delta(1), epsilon(1). CF(0) has three main subunits: a(1), b(2) and c(9-12). The alpha and beta chains form an alternating ring which encloses part of the gamma chain. CF(1) is attached to CF(0) by a central stalk formed by the gamma and epsilon chains, while a peripheral stalk is formed by the delta and b chains.

It is found in the cell inner membrane. The enzyme catalyses ATP + H2O + 4 H(+)(in) = ADP + phosphate + 5 H(+)(out). Functionally, produces ATP from ADP in the presence of a proton gradient across the membrane. The catalytic sites are hosted primarily by the beta subunits. This is ATP synthase subunit beta from Nitrobacter hamburgensis (strain DSM 10229 / NCIMB 13809 / X14).